A 301-amino-acid chain; its full sequence is Homeobox protein Nkx-2.6 (301 aa).

The interval glutamate 22–proline 135 is disordered. A DNA-binding region (homeobox) is located at residues arginine 132–arginine 191.

Belongs to the NK-2 homeobox family.

It localises to the nucleus. In terms of biological role, acts as a transcriptional activator. In conjunction with NKX2-5, may play a role in both pharyngeal and cardiac embryonic development. This Homo sapiens (Human) protein is Homeobox protein Nkx-2.6 (NKX2-6).